The primary structure comprises 59 residues: Large ribosomal subunit protein uL30 (59 aa).

It belongs to the universal ribosomal protein uL30 family. In terms of assembly, part of the 50S ribosomal subunit.

The protein is Large ribosomal subunit protein uL30 of Desulforamulus reducens (strain ATCC BAA-1160 / DSM 100696 / MI-1) (Desulfotomaculum reducens).